Reading from the N-terminus, the 383-residue chain is D-alanine--D-alanine ligase (383 aa).

The ATP-grasp domain occupies K169 to R373. An ATP-binding site is contributed by Q196–E251. Mg(2+)-binding residues include D327, E340, and N342.

This sequence belongs to the D-alanine--D-alanine ligase family. The cofactor is Mg(2+). Mn(2+) is required as a cofactor.

The protein localises to the cytoplasm. The catalysed reaction is 2 D-alanine + ATP = D-alanyl-D-alanine + ADP + phosphate + H(+). It participates in cell wall biogenesis; peptidoglycan biosynthesis. Its function is as follows. Cell wall formation. The polypeptide is D-alanine--D-alanine ligase (Frankia casuarinae (strain DSM 45818 / CECT 9043 / HFP020203 / CcI3)).